Reading from the N-terminus, the 492-residue chain is G protein-activated inward rectifier potassium channel 1 (492 aa).

Over 1–72 (MSALRRKLGD…LFTTLVDLKW (72 aa)) the chain is Cytoplasmic. A disordered region spans residues 16-35 (STSASGGGLPPPRAAPRGKR). The chain crosses the membrane as a helical span at residues 73-97 (RWNLFIFVLTYTVAWLFMASMWWVI). The Extracellular segment spans residues 98-121 (AYMRGDLNKAHDDSYTPCVANVYN). Residues 122–133 (FPSAFLFFIETE) constitute an intramembrane region (helical; Pore-forming). The segment at residues 134–140 (ATIGYGY) is an intramembrane region (pore-forming). A Selectivity filter motif is present at residues 135–140 (TIGYGY). Residues 141–149 (RYITDKCPE) are Extracellular-facing. A helical transmembrane segment spans residues 150–171 (GIILFLFQSILGSIVDAFLIGC). Over 172–492 (MFIKMSQPKK…LRKMNSDRFT (321 aa)) the chain is Cytoplasmic. A polyphosphoinositide (PIP2)-binding region spans residues 174–201 (IKMSQPKKRAETLMFSEHAAISMRDGKL). The interval 452 to 492 (SDPMSQSVADLPPKLQKLSGGGRMEGNLPPKLRKMNSDRFT) is disordered.

It belongs to the inward rectifier-type potassium channel (TC 1.A.2.1) family. KCNJ3 subfamily. Associates with KCNJ5/GIRK4 or KCNJ6/GIRK2 or KCNJ9/GIRK3 to form a G-protein activated heteromultimer pore-forming unit. The resulting inward current is much larger.

It localises to the membrane. It catalyses the reaction K(+)(in) = K(+)(out). With respect to regulation, heteromultimer composed of KCNJ3/GIRK1 and KCNJ5/GIRK4 is activated by phosphatidylinositol 4,5 biphosphate (PtdIns(4,5)P2). Inward rectifier potassium channels are characterized by a greater tendency to allow potassium to flow into the cell rather than out of it. Their voltage dependence is regulated by the concentration of extracellular potassium; as external potassium is raised, the voltage range of the channel opening shifts to more positive voltages. The inward rectification is mainly due to the blockage of outward current by internal magnesium. This potassium channel is controlled by G proteins. This receptor plays a crucial role in regulating the heartbeat. In Gallus gallus (Chicken), this protein is G protein-activated inward rectifier potassium channel 1 (KCNJ3).